We begin with the raw amino-acid sequence, 3589 residues long: D-lysergyl-peptide-synthetase subunit 1 (3589 aa).

The segment at 344 to 742 is adenylation (A) domain 1; it reads NCHSRPDSLA…IGRKDLQVKV (399 aa). Residues 883–952 form the Carrier 1 domain; it reads VERRLQLLFA…KLRDLAAASS (70 aa). The residue at position 915 (Ser-915) is an O-(pantetheine 4'-phosphoryl)serine. The segment at 995–1380 is condensation (C) domain 1; sequence EDIYPCTSLQ…SQFQHILTQI (386 aa). Residues 1424-1826 are adenylation (A) domain 2; the sequence is QAKAQMQPEA…RRKDSQVKLR (403 aa). The 69-residue stretch at 1974–2042 folds into the Carrier 2 domain; that stretch reads LERELQKIWA…TIEKLAAAAV (69 aa). Ser-2006 is subject to O-(pantetheine 4'-phosphoryl)serine. The condensation (C) domain 2 stretch occupies residues 2087 to 2509; sequence VEDIYPCSPI…IEMLDEEHRS (423 aa). Positions 2534–2929 are adenylation (A) domain 3; that stretch reads CLESPESPAI…GRKDDQVKIR (396 aa). Positions 3064 to 3132 constitute a Carrier 3 domain; it reads LETRLQELVG…RLSELAVVLN (69 aa). Position 3096 is an O-(pantetheine 4'-phosphoryl)serine (Ser-3096). The tract at residues 3187–3585 is cyclization (Cyc) domain; the sequence is TNFIALHFSQ…TYPESLVSEL (399 aa).

Belongs to the NRP synthetase family.

Its pathway is alkaloid biosynthesis; ergot alkaloid biosynthesis. Functionally, D-lysergyl-peptide-synthetase subunit 1; part of the gene cluster that mediates the biosynthesis of fungal ergot alkaloid ergovaline, the predominant ergopeptine product in E.festucae var. lolii. DmaW catalyzes the first step of ergot alkaloid biosynthesis by condensing dimethylallyl diphosphate (DMAP) and tryptophan to form 4-dimethylallyl-L-tryptophan. The second step is catalyzed by the methyltransferase easF that methylates 4-dimethylallyl-L-tryptophan in the presence of S-adenosyl-L-methionine, resulting in the formation of 4-dimethylallyl-L-abrine. The catalase easC and the FAD-dependent oxidoreductase easE then transform 4-dimethylallyl-L-abrine to chanoclavine-I which is further oxidized by easD in the presence of NAD(+), resulting in the formation of chanoclavine-I aldehyde. Agroclavine dehydrogenase easG then mediates the conversion of chanoclavine-I aldehyde to agroclavine via a non-enzymatic adduct reaction: the substrate is an iminium intermediate that is formed spontaneously from chanoclavine-I aldehyde in the presence of glutathione. The presence of easA is not required to complete this reaction. Further conversion of agroclavine to paspalic acid is a two-step process involving oxidation of agroclavine to elymoclavine and of elymoclavine to paspalic acid, the second step being performed by the elymoclavine oxidase cloA. Paspalic acid is then further converted to D-lysergic acid. Ergovaline is assembled from D-lysergic acid and three different amino acids by the D-lysergyl-peptide-synthetase composed of a monomudular (lpsB) and a trimodular (lpsA) nonribosomal peptide synthetase subunit. This chain is D-lysergyl-peptide-synthetase subunit 1, found in Epichloe festucae var. lolii (Neotyphodium lolii).